The following is a 159-amino-acid chain: 2-C-methyl-D-erythritol 2,4-cyclodiphosphate synthase (159 aa).

Residues Asp8 and His10 each coordinate a divalent metal cation. Residues Asp8–His10 and His34–Ser35 contribute to the 4-CDP-2-C-methyl-D-erythritol 2-phosphate site. His42 provides a ligand contact to a divalent metal cation. 4-CDP-2-C-methyl-D-erythritol 2-phosphate contacts are provided by residues Asp56 to Gly58, Phe61 to Asp65, Ala100 to Leu106, Thr132 to Glu135, Phe139, and Arg142.

It belongs to the IspF family. In terms of assembly, homotrimer. The cofactor is a divalent metal cation.

The enzyme catalyses 4-CDP-2-C-methyl-D-erythritol 2-phosphate = 2-C-methyl-D-erythritol 2,4-cyclic diphosphate + CMP. The protein operates within isoprenoid biosynthesis; isopentenyl diphosphate biosynthesis via DXP pathway; isopentenyl diphosphate from 1-deoxy-D-xylulose 5-phosphate: step 4/6. In terms of biological role, involved in the biosynthesis of isopentenyl diphosphate (IPP) and dimethylallyl diphosphate (DMAPP), two major building blocks of isoprenoid compounds. Catalyzes the conversion of 4-diphosphocytidyl-2-C-methyl-D-erythritol 2-phosphate (CDP-ME2P) to 2-C-methyl-D-erythritol 2,4-cyclodiphosphate (ME-CPP) with a corresponding release of cytidine 5-monophosphate (CMP). This is 2-C-methyl-D-erythritol 2,4-cyclodiphosphate synthase from Klebsiella pneumoniae (strain 342).